Consider the following 357-residue polypeptide: Glutamyl endopeptidase (357 aa).

An N-terminal signal peptide occupies residues 1–29; the sequence is MKGKFLKVSSLFVATLTTATLVSSPAANA. Positions 30–68 are excised as a propeptide; it reads LSSKAMDNHPQQTQTDKQQTPKIQKGGNLKPLEQRERAN. Residues 33–58 form a disordered region; the sequence is KAMDNHPQQTQTDKQQTPKIQKGGNL. A compositionally biased stretch (low complexity) spans 40 to 54; the sequence is QQTQTDKQQTPKIQK. Residues His-119, Asp-161, and Ser-237 each act as charge relay system in the active site. Residues 282–357 are disordered; that stretch reads NFANDDHPNN…NNNSDNPDAA (76 aa). 18 consecutive repeat copies span residues 289-291, 292-294, 295-297, 298-300, 301-303, 304-306, 307-309, 310-312, 313-315, 316-318, 319-321, 322-324, 325-327, 328-330, 331-333, 337-339, 340-342, and 343-345. The interval 289-345 is 18 X 3 AA repeats of P-[DN]-N; the sequence is PNNPDNPDNPNNPDNPNNPDNPNNPDNPDNPNNPDNPNNPDNPNNPDQPNNPNNPDN. Over residues 291 to 357 the composition is skewed to low complexity; that stretch reads NPDNPDNPNN…NNNSDNPDAA (67 aa).

This sequence belongs to the peptidase S1B family. Proteolytically cleaved by aureolysin (aur). This cleavage leads to the activation of SspA.

Its subcellular location is the secreted. It catalyses the reaction Preferential cleavage: Glu-|-Xaa, Asp-|-Xaa.. Its function is as follows. Preferentially cleaves peptide bonds on the carboxyl-terminal side of aspartate and glutamate. Along with other extracellular proteases it is involved in colonization and infection of human tissues. Required for proteolytic maturation of thiol protease SspB and inactivation of SspC, an inhibitor of SspB. It is the most important protease for degradation of fibronectin-binding protein (FnBP) and surface protein A, which are involved in adherence to host cells. May also protect bacteria against host defense mechanism by cleaving the immunoglobulin classes IgG, IgA and IgM. May be involved in the stability of secreted lipases. The sequence is that of Glutamyl endopeptidase (sspA) from Staphylococcus aureus (strain MRSA252).